Here is a 106-residue protein sequence, read N- to C-terminus: Immunoglobulin lambda constant 2 (106 aa).

The region spanning 7-101 is the Ig-like domain; that stretch reads PSVTLFPPSS…EGSTVEKTVA (95 aa). A disulfide bridge links C28 with C87.

Immunoglobulins are composed of two identical heavy chains and two identical light chains; disulfide-linked.

It is found in the secreted. Its subcellular location is the cell membrane. In terms of biological role, constant region of immunoglobulin light chains. Immunoglobulins, also known as antibodies, are membrane-bound or secreted glycoproteins produced by B lymphocytes. In the recognition phase of humoral immunity, the membrane-bound immunoglobulins serve as receptors which, upon binding of a specific antigen, trigger the clonal expansion and differentiation of B lymphocytes into immunoglobulins-secreting plasma cells. Secreted immunoglobulins mediate the effector phase of humoral immunity, which results in the elimination of bound antigens. The antigen binding site is formed by the variable domain of one heavy chain, together with that of its associated light chain. Thus, each immunoglobulin has two antigen binding sites with remarkable affinity for a particular antigen. The variable domains are assembled by a process called V-(D)-J rearrangement and can then be subjected to somatic hypermutations which, after exposure to antigen and selection, allow affinity maturation for a particular antigen. In Homo sapiens (Human), this protein is Immunoglobulin lambda constant 2.